A 512-amino-acid chain; its full sequence is SWI/SNF complex subunit SWI3A (512 aa).

Residues 13–110 (YTIPAQSSWF…FSSSLKKNDH (98 aa)) form the SWIRM domain. The SANT domain maps to 223–274 (SAAAVWTEEEILLLLESVLKHGDDWELISQSVSTKSRLDCISKLIELPFGEF). A disordered region spans residues 291-325 (DENTEQVQTDGQEHEETETREEKEDRVNEDEPPAK). Residues 424 to 488 (ALGAAAAQAK…IEGVKETIIQ (65 aa)) are a coiled coil.

As to quaternary structure, homodimers and heterodimers. Interacts with SWI3B, SWI3C, BSH, and the C-terminus of FCA, but not with BRM or SWI3D. Expressed in roots, stems, leaves and flowers, but not in siliques.

It localises to the nucleus. Functionally, component of a multiprotein complex equivalent of the SWI/SNF complex, an ATP-dependent chromatin-remodeling complex, which is required for the positive and negative regulation of gene expression of a large number of genes. It changes chromatin structure by altering DNA-histone contacts within a nucleosome, leading eventually to a change in nucleosome position, thus facilitating or repressing binding of gene-specific transcription factors. In Arabidopsis thaliana (Mouse-ear cress), this protein is SWI/SNF complex subunit SWI3A (SWI3A).